The sequence spans 448 residues: Trigger factor (448 aa).

A PPIase FKBP-type domain is found at 172–257 (GDRVTVDFVG…MKKIEWPHLP (86 aa)).

It belongs to the FKBP-type PPIase family. Tig subfamily.

It is found in the cytoplasm. It carries out the reaction [protein]-peptidylproline (omega=180) = [protein]-peptidylproline (omega=0). In terms of biological role, involved in protein export. Acts as a chaperone by maintaining the newly synthesized protein in an open conformation. Functions as a peptidyl-prolyl cis-trans isomerase. This chain is Trigger factor, found in Burkholderia ambifaria (strain ATCC BAA-244 / DSM 16087 / CCUG 44356 / LMG 19182 / AMMD) (Burkholderia cepacia (strain AMMD)).